We begin with the raw amino-acid sequence, 221 residues long: H-2 class II histocompatibility antigen, A-Q alpha chain (221 aa).

Positions 1–76 (GIVVYQSPGD…KRSNFTPATN (76 aa)) are alpha-1. Over 1 to 183 (GIVVYQSPGD…IPAPMSELTE (183 aa)) the chain is Extracellular. Residues 77 to 170 (EAPQATVFPK…GLDEPVLKHW (94 aa)) are alpha-2. In terms of domain architecture, Ig-like C1-type spans 79–171 (PQATVFPKSP…LDEPVLKHWE (93 aa)). A disulfide bond links Cys-99 and Cys-155. N-linked (GlcNAc...) asparagine glycosylation is present at Asn-110. A connecting peptide region spans residues 171–183 (EPEIPAPMSELTE). Residues 184 to 209 (TVVCALGLSVGLVGIVVGTIFIIQGL) traverse the membrane as a helical segment. The Cytoplasmic segment spans residues 210–221 (RSGGTSRPPGPL).

Belongs to the MHC class II family.

It localises to the membrane. The chain is H-2 class II histocompatibility antigen, A-Q alpha chain (H2-Aa) from Mus musculus (Mouse).